The primary structure comprises 478 residues: Zinc metalloproteinase/disintegrin (478 aa).

The signal sequence occupies residues 1–20; the sequence is MIQVLLVTICLAAFPYQGSS. A propeptide spanning residues 21–187 is cleaved from the precursor; the sequence is IILESGNVND…PIKKASDLNL (167 aa). One can recognise a Peptidase M12B domain in the interval 193 to 389; it reads RYVELFIVVD…QKPQCILKKP (197 aa). 3 cysteine pairs are disulfide-bonded: Cys304/Cys384, Cys344/Cys368, and Cys346/Cys351. His329 contacts Zn(2+). The active site involves Glu330. Residues His333 and His339 each contribute to the Zn(2+) site. Residues 390–407 constitute a propeptide that is removed on maturation; the sequence is LRTDTVSTPVSGNELLEA. The 82-residue stretch at 397–478 folds into the Disintegrin domain; the sequence is TPVSGNELLE…ADCPRNGLYG (82 aa). Disulfide bonds link Cys411–Cys426, Cys413–Cys421, Cys420–Cys443, Cys434–Cys440, Cys439–Cys464, and Cys452–Cys471. The Cell attachment site; atypical (MVD) signature appears at 456–458; the sequence is MVD.

It belongs to the venom metalloproteinase (M12B) family. P-II subfamily. P-IIa sub-subfamily. Monomer (disintegrin). The cofactor is Zn(2+). In terms of tissue distribution, expressed by the venom gland.

It localises to the secreted. The catalysed reaction is Cleavage of 3-Asn-|-Gln-4, 9-Ser-|-His-10 and 14-Ala-|-Leu-15 bonds in insulin B chain and 14-Tyr-|-Gln-15 and 8-Thr-|-Ser-9 in A chain. Cleaves type IV collagen at 73-Ala-|-Gln-74 in alpha1-(IV) and at 7-Gly-|-Leu-8 in alpha2-(IV).. Functionally, snake venom zinc metalloproteinase that causes hemorrhage by provoking the degradation of the sub-endothelial matrix proteins (fibronectin, laminin, type IV collagen, nidogen, and gelatins). Its function is as follows. Potent inhibitor of both collagen- (IC(50)=4 nM) and ADP-induced (IC(50)=8 nM) platelet aggregation. May act by binding to the platelet receptor GPIIb/GPIIIa (ITGA2B/ITGB3). In Crotalus atrox (Western diamondback rattlesnake), this protein is Zinc metalloproteinase/disintegrin.